Consider the following 360-residue polypeptide: Type 2 DNA topoisomerase 6 subunit A (360 aa).

In terms of domain architecture, Topo IIA-type catalytic spans 3–140 (EIERRCLRAL…FHIRPEEDGA (138 aa)). Y97 (O-(5'-phospho-DNA)-tyrosine intermediate) is an active-site residue. Mg(2+) is bound by residues E193 and D245.

Belongs to the TOP6A family. In terms of assembly, homodimer. Heterotetramer of two Top6A and two Top6B chains. Mg(2+) serves as cofactor.

The catalysed reaction is ATP-dependent breakage, passage and rejoining of double-stranded DNA.. Its function is as follows. Relaxes both positive and negative superturns and exhibits a strong decatenase activity. The chain is Type 2 DNA topoisomerase 6 subunit A from Archaeoglobus fulgidus (strain ATCC 49558 / DSM 4304 / JCM 9628 / NBRC 100126 / VC-16).